A 176-amino-acid polypeptide reads, in one-letter code: MTDNNIENKEEEIINDIAEEVENTEIADLKAQIEELKDKLIRASAEIDNTRKRLEKARDEARDYAITTFAKELLNVSDNLSRALEHKPLDASVEVTNIIAGVQMTKDELDKVFHKHHIEEIKPEIGSTFDYNLHNAISQIEHPDHEPNSVINIMQVGYRIKDRLLRPATVQVTKKT.

Belongs to the GrpE family. Homodimer.

It is found in the cytoplasm. In terms of biological role, participates actively in the response to hyperosmotic and heat shock by preventing the aggregation of stress-denatured proteins, in association with DnaK and GrpE. It is the nucleotide exchange factor for DnaK and may function as a thermosensor. Unfolded proteins bind initially to DnaJ; upon interaction with the DnaJ-bound protein, DnaK hydrolyzes its bound ATP, resulting in the formation of a stable complex. GrpE releases ADP from DnaK; ATP binding to DnaK triggers the release of the substrate protein, thus completing the reaction cycle. Several rounds of ATP-dependent interactions between DnaJ, DnaK and GrpE are required for fully efficient folding. The protein is Protein GrpE of Rickettsia bellii (strain OSU 85-389).